A 973-amino-acid polypeptide reads, in one-letter code: Putative cell agglutination protein pfl3 (973 aa).

The N-terminal stretch at 1 to 24 (MSLFPQILLRLLFLAFTLKSTSNA) is a signal peptide. Asparagine 75, asparagine 96, asparagine 147, asparagine 171, asparagine 184, asparagine 218, and asparagine 253 each carry an N-linked (GlcNAc...) asparagine glycan. 18 tandem repeats follow at residues 198–232 (GTIT…IPTA), 233–267 (GTVT…IPTA), 268–302 (GTRT…LPTA), 303–337 (GTNT…YPTA), 338–372 (GMVT…IPTA), 373–407 (GTVT…IPTA), 408–442 (GTRT…LPTA), 443–477 (GTNT…EPTA), 478–512 (GVVT…EPTA), 513–547 (GVVT…EPTA), 548–582 (GVVT…EPTA), 583–617 (GVVT…EPTA), 618–652 (GVVT…EPTA), 653–687 (GVVT…EPTA), 688–722 (GVVT…EPTA), 723–757 (GVVT…EPTA), 758–792 (GVVT…EPTA), and 793–828 (GYVT…VPSL). The interval 198-828 (GTITLTTISG…GTVLQVVPSL (631 aa)) is 18 X 35 AA approximate tandem repeats. 2 N-linked (GlcNAc...) asparagine glycosylation sites follow: asparagine 352 and asparagine 393. In terms of domain architecture, DIPSY spans 820-973 (TVLQVVPSLF…SNVYFKAVPL (154 aa)). N-linked (GlcNAc...) asparagine glycosylation is present at asparagine 848.

It belongs to the mam3/map4 family.

The protein resides in the cell surface. In terms of biological role, may be involved in agglutination during conjugation or other aspects of colony formation. Induces flocculation when overexpressed. The protein is Putative cell agglutination protein pfl3 of Schizosaccharomyces pombe (strain 972 / ATCC 24843) (Fission yeast).